Consider the following 1063-residue polypeptide: Retinoblastoma-like protein 1 (1063 aa).

Residues threonine 332, threonine 369, and threonine 385 each carry the phosphothreonine modification. The interval 383 to 584 (VTTPVASATQ…WEALHASANR (202 aa)) is domain A. Residues 383–944 (VTTPVASATQ…GRVKSFALKY (562 aa)) are pocket; binds T and E1A. Residues 585–779 (VPSCEEVIFP…AQDAHLTGVS (195 aa)) form a spacer region. 4 positions are modified to phosphoserine: serine 640, serine 650, serine 748, and serine 761. The tract at residues 780–944 (KPKRTGSLAL…GRVKSFALKY (165 aa)) is domain B. A phosphoserine mark is found at serine 959, serine 970, and serine 983. Threonine 992 carries the phosphothreonine modification. Residues serine 1004 and serine 1036 each carry the phosphoserine modification.

Belongs to the retinoblastoma protein (RB) family. Component of the DREAM complex (also named LINC complex) at least composed of E2F4, E2F5, LIN9, LIN37, LIN52, LIN54, MYBL1, MYBL2, RBL1, RBL2, RBBP4, TFDP1 and TFDP2. The complex exists in quiescent cells where it represses cell cycle-dependent genes. It dissociates in S phase when LIN9, LIN37, LIN52 and LIN54 form a subcomplex that binds to MYBL2. Interacts with AATF. Interacts with KDM5A. Interacts with KMT5B and KMT5C. Interacts with USP4. Interacts with RBBP9. Post-translationally, cell-cycle arrest properties are inactivated by phosphorylation on Thr-332, Ser-640, Ser-959 and Ser-970 by CDK4. Highly expressed in fetal heart and liver. Expressed at low levels in all other fetal tissues except skeletal muscle. High levels in neonatal spleen and thymus with low levels in other tissues. In adult, highly expressed in testis. Barely detectable in other tissues.

Its subcellular location is the nucleus. Its function is as follows. Key regulator of entry into cell division. Directly involved in heterochromatin formation by maintaining overall chromatin structure and, in particular, that of constitutive heterochromatin by stabilizing histone methylation. Recruits and targets histone methyltransferases KMT5B and KMT5C, leading to epigenetic transcriptional repression. Controls histone H4 'Lys-20' trimethylation. Probably acts as a transcription repressor by recruiting chromatin-modifying enzymes to promoters. Potent inhibitor of E2F-mediated trans-activation. May act as a tumor suppressor. The protein is Retinoblastoma-like protein 1 (Rbl1) of Mus musculus (Mouse).